The sequence spans 29 residues: NAD-reducing hydrogenase HoxS subunit delta (29 aa).

Basic and acidic residues predominate over residues 1–11; the sequence is MKHSEKNEIAS. The segment at 1 to 29 is disordered; it reads MKHSEKNEIASHELPTTPLDPVLAAGRES.

This sequence belongs to the [NiFe]/[NiFeSe] hydrogenase small subunit family. In terms of assembly, tetramer of an alpha and a gamma subunits (flavin-containing dimer), and a delta and a nickel-containing beta subunits (hydrogenase dimer). [4Fe-4S] cluster serves as cofactor. The cofactor is [3Fe-4S] cluster. Requires [2Fe-2S] cluster as cofactor. It depends on FMN as a cofactor. Ni(2+) is required as a cofactor.

It localises to the cytoplasm. The enzyme catalyses H2 + NAD(+) = NADH + H(+). In Rhodococcus opacus (Nocardia opaca), this protein is NAD-reducing hydrogenase HoxS subunit delta (hoxY).